The following is a 250-amino-acid chain: Uracil-DNA glycosylase (250 aa).

Asp-78 serves as the catalytic Proton acceptor. Positions 228-250 (RGQKPVDWSGEQNNASRQGKFAL) are disordered.

This sequence belongs to the uracil-DNA glycosylase (UDG) superfamily. UNG family.

Its subcellular location is the cytoplasm. It carries out the reaction Hydrolyzes single-stranded DNA or mismatched double-stranded DNA and polynucleotides, releasing free uracil.. Functionally, excises uracil residues from the DNA which can arise as a result of misincorporation of dUMP residues by DNA polymerase or due to deamination of cytosine. In Bordetella bronchiseptica (strain ATCC BAA-588 / NCTC 13252 / RB50) (Alcaligenes bronchisepticus), this protein is Uracil-DNA glycosylase.